Reading from the N-terminus, the 413-residue chain is Sulfoquinovose isomerase (413 aa).

5 residues coordinate 6-sulfo-beta-D-quinovose: arginine 55, tyrosine 111, asparagine 172, histidine 176, and arginine 238. Catalysis depends on histidine 248, which acts as the Proton donor/acceptor. Positions 251, 362, 379, and 383 each coordinate 6-sulfo-beta-D-quinovose. Histidine 383 functions as the Proton donor/acceptor in the catalytic mechanism.

The protein belongs to the N-acylglucosamine 2-epimerase family. As to quaternary structure, homohexamer.

The enzyme catalyses 6-sulfo-beta-D-quinovose = 6-deoxy-6-sulfo-D-fructose. It catalyses the reaction 6-sulfo-beta-D-quinovose = 6-sulfo-D-rhamnose. Significantly inhibited by Cu(2+), Fe(3+) and Co(2+). Partially inhibited by Mg(2+), Ca(2+) and Mn(2+). Also inhibited by ATP, ADP, dATP, TTP and GTP. In terms of biological role, catalyzes the isomerization of sulfoquinovose (SQ) to 6-deoxy-6-sulfo-D-fructose (SF). Can also catalyze the interconversion of SQ and sulforhamnose (SR). Has a clear preference for beta-SQ and little-to-no activity on alpha-SQ. In vitro, can also catalyze the interconversion of mannose, fructose and glucose, or lyxose and xylulose, but has extremely low activity with glucose. This chain is Sulfoquinovose isomerase (yihS), found in Escherichia coli (strain K12).